Reading from the N-terminus, the 680-residue chain is PAN2-PAN3 deadenylation complex subunit PAN3 (680 aa).

Disordered regions lie at residues 1–26 (MATT…RADT), 51–87 (HDQT…SKKT), and 99–120 (FTPR…TDIP). The C3H1-type zinc-finger motif lies at 25–54 (DTKDTLCRNILIYGHCRYEDAGCAFNHDQT). A compositionally biased stretch (basic and acidic residues) spans 52-64 (DQTKKSPKPDATT). The PABPC-interacting motif-2 (PAM-2) motif lies at 62 to 82 (ATTRKTLNVDSAPFTPAVSSQ). The segment covering 99–117 (FTPRATAATPTGTPTAQET) has biased composition (low complexity). The interval 256–522 (QTMTGTAALQ…TVKNLVAGIN (267 aa)) is pseudokinase domain. ATP is bound by residues R311, 360 to 367 (EYYPLAET), and 422 to 423 (TK). The stretch at 523–561 (EHVMTAFDAQQRQSDMLYSELYREVENGRVLRLLMKLAT) forms a coiled coil. The knob domain stretch occupies residues 562 to 680 (INERTEYDKD…VHHPSHRDRF (119 aa)). Gly residues predominate over residues 655 to 669 (SGNGRGGPVASGSGH). Residues 655-680 (SGNGRGGPVASGSGHGVHHPSHRDRF) form a disordered region. Basic residues predominate over residues 670–680 (GVHHPSHRDRF).

It belongs to the protein kinase superfamily. PAN3 family. As to quaternary structure, homodimer. Forms a heterotrimer with a catalytic subunit PAN2 to form the poly(A)-nuclease (PAN) deadenylation complex. Interacts (via PAM-2 motif) with poly(A)-binding protein PAB1 (via PABC domain), conferring substrate specificity of the enzyme complex.

It localises to the cytoplasm. In terms of biological role, regulatory subunit of the poly(A)-nuclease (PAN) deadenylation complex, one of two cytoplasmic mRNA deadenylases involved in mRNA turnover. PAN specifically shortens poly(A) tails of RNA and the activity is stimulated by poly(A)-binding protein PAB1. PAN deadenylation is followed by rapid degradation of the shortened mRNA tails by the CCR4-NOT complex. Deadenylated mRNAs are then degraded by two alternative mechanisms, namely exosome-mediated 3'-5' exonucleolytic degradation, or deadenylation-dependent mRNA decaping and subsequent 5'-3' exonucleolytic degradation by XRN1. May also be involved in post-transcriptional maturation of mRNA poly(A) tails. PAN3 acts as a positive regulator for PAN activity, recruiting the catalytic subunit PAN2 to mRNA via its interaction with RNA and with PAB1. The polypeptide is PAN2-PAN3 deadenylation complex subunit PAN3 (Pyricularia oryzae (strain 70-15 / ATCC MYA-4617 / FGSC 8958) (Rice blast fungus)).